The primary structure comprises 539 residues: GMP synthase [glutamine-hydrolyzing] (539 aa).

Positions 4–202 constitute a Glutamine amidotransferase type-1 domain; it reads KILILDFGSQ…VLQIAGAKPD (199 aa). The Nucleophile role is filled by cysteine 81. Residues histidine 176 and glutamate 178 contribute to the active site. One can recognise a GMPS ATP-PPase domain in the interval 203–395; sequence WIMKNHIEEA…LGLPPEMVYR (193 aa). Residue 230 to 236 participates in ATP binding; the sequence is SGGVDSS.

In terms of assembly, homodimer.

The enzyme catalyses XMP + L-glutamine + ATP + H2O = GMP + L-glutamate + AMP + diphosphate + 2 H(+). It participates in purine metabolism; GMP biosynthesis; GMP from XMP (L-Gln route): step 1/1. Catalyzes the synthesis of GMP from XMP. This Burkholderia cenocepacia (strain ATCC BAA-245 / DSM 16553 / LMG 16656 / NCTC 13227 / J2315 / CF5610) (Burkholderia cepacia (strain J2315)) protein is GMP synthase [glutamine-hydrolyzing].